A 774-amino-acid chain; its full sequence is FT-interacting protein 7 (774 aa).

Positions 1–17 (MMQRPFRPEEYSLKETS) are enriched in basic and acidic residues. The segment at 1 to 25 (MMQRPFRPEEYSLKETSPHLGGGAA) is disordered. C2 domains lie at 23–143 (GAAG…PQWY), 182–305 (IPGD…SQWY), and 346–472 (YSSD…THAY). Residues aspartate 56, aspartate 62, aspartate 109, aspartate 111, and aspartate 116 each coordinate Ca(2+). The next 3 membrane-spanning stretches (helical) occupy residues 575 to 595 (IMGVLSPLIAVAKWFDQICHW), 606 to 626 (ILFVILVLYPELILPTIFLYL), and 714 to 734 (ATALFVTFCFVAAIVLYVTPF).

Belongs to the MCTP family. Interacts with OSH1. Ca(2+) serves as cofactor. As to expression, expressed in roots, stems, lemma, palea, pistils and ovules. Expressed at low levels in leaves.

The protein localises to the cell membrane. Promotes nuclear translocation of the transcription factor OSH1, which directly suppresses the auxin biosynthetic gene YUCCA4 during the late development of anthers. Reduction of auxin levels at late stage of anther development, after meiosis of microspore mother cells, is necessary for normal anther dehiscence and seed setting. Required for jasmonate (JA) biosynthetic genes expression and JA production in anthers. This chain is FT-interacting protein 7, found in Oryza sativa subsp. japonica (Rice).